The chain runs to 193 residues: MGVIVPGNSSPVPALSAGRSTVEGYDPKLHDPFFDGVSQQLADKGFITAAADDLITWARTGSLMWMTFGLACCAVEMMQASMPRYDLERYGFAPRASPRQSDVMIVAGTLTNKMAPALRKVYDQMPEPRYVISMGSCANGGGYYYYSYSVVRGCDRVVPVDIYVPGCPPTAEALVYGVLQLQKKIRRTGTIER.

Residues C72, C73, C137, and C167 each contribute to the [4Fe-4S] cluster site.

This sequence belongs to the complex I 20 kDa subunit family. NDH-1 is composed of 14 different subunits. Subunits NuoB, C, D, E, F, and G constitute the peripheral sector of the complex. Requires [4Fe-4S] cluster as cofactor.

It is found in the cell inner membrane. It catalyses the reaction a quinone + NADH + 5 H(+)(in) = a quinol + NAD(+) + 4 H(+)(out). Its function is as follows. NDH-1 shuttles electrons from NADH, via FMN and iron-sulfur (Fe-S) centers, to quinones in the respiratory chain. The immediate electron acceptor for the enzyme in this species is believed to be ubiquinone. Couples the redox reaction to proton translocation (for every two electrons transferred, four hydrogen ions are translocated across the cytoplasmic membrane), and thus conserves the redox energy in a proton gradient. The polypeptide is NADH-quinone oxidoreductase subunit B (Caulobacter vibrioides (strain ATCC 19089 / CIP 103742 / CB 15) (Caulobacter crescentus)).